Consider the following 179-residue polypeptide: Ribosome maturation factor RimM (179 aa).

A PRC barrel domain is found at 96–175 (KDEYFWFDIE…IITVIGAMDI (80 aa)).

The protein belongs to the RimM family. Binds ribosomal protein uS19.

The protein localises to the cytoplasm. An accessory protein needed during the final step in the assembly of 30S ribosomal subunit, possibly for assembly of the head region. Essential for efficient processing of 16S rRNA. May be needed both before and after RbfA during the maturation of 16S rRNA. It has affinity for free ribosomal 30S subunits but not for 70S ribosomes. This is Ribosome maturation factor RimM from Sulfurimonas denitrificans (strain ATCC 33889 / DSM 1251) (Thiomicrospira denitrificans (strain ATCC 33889 / DSM 1251)).